Here is a 218-residue protein sequence, read N- to C-terminus: THAP domain-containing protein 3 (218 aa).

The segment at 1 to 82 (MPKSCAARQC…LKHNAVPTVF (82 aa)) adopts a THAP-type zinc-finger fold. Disordered regions lie at residues 97–120 (GGDS…PEGP) and 133–154 (ATEA…PGQP). S100 bears the Phosphoserine mark. The HCFC1-binding motif (HBM) signature appears at 156–159 (DHSY).

In terms of assembly, component of a THAP1/THAP3-HCFC1-OGT complex that contains at least, either THAP1 or THAP3, HCFC1 and OGT. Interacts directly with OGT and HCFC1 (via its HBM). As to expression, highest levels in heart, liver and kidney. Lower levels in brain and lung.

Functionally, component of a THAP1/THAP3-HCFC1-OGT complex that is required for the regulation of the transcriptional activity of RRM1. The protein is THAP domain-containing protein 3 (Thap3) of Mus musculus (Mouse).